We begin with the raw amino-acid sequence, 213 residues long: MKREDLQLYFIMGTSNVSHQEPLVVLEKALRAGITMFQLREKGPYALTGLAYEQFARQCQQLCQHYHVPFIVNDDVDLAVRLGADGVHIGQDDEQIAIARKKMANRILGVSVHSQEELQIAIDHHADYVGIGPIFATTSKSDAQPPCGTNFLQQASKLQPNLPIVAIGGINGINADIVFQAGADGVAVISALCESEDIEQTVSIFKSLNRIKR.

Residues 38 to 42 (QLREK) and Asn-73 contribute to the 4-amino-2-methyl-5-(diphosphooxymethyl)pyrimidine site. 2 residues coordinate Mg(2+): Asp-74 and Asp-93. Position 111 (Ser-111) interacts with 4-amino-2-methyl-5-(diphosphooxymethyl)pyrimidine. 137–139 (TTS) is a 2-[(2R,5Z)-2-carboxy-4-methylthiazol-5(2H)-ylidene]ethyl phosphate binding site. Lys-140 lines the 4-amino-2-methyl-5-(diphosphooxymethyl)pyrimidine pocket. 2-[(2R,5Z)-2-carboxy-4-methylthiazol-5(2H)-ylidene]ethyl phosphate-binding positions include Gly-169 and 189 to 190 (IS).

The protein belongs to the thiamine-phosphate synthase family. Mg(2+) is required as a cofactor.

It catalyses the reaction 2-[(2R,5Z)-2-carboxy-4-methylthiazol-5(2H)-ylidene]ethyl phosphate + 4-amino-2-methyl-5-(diphosphooxymethyl)pyrimidine + 2 H(+) = thiamine phosphate + CO2 + diphosphate. It carries out the reaction 2-(2-carboxy-4-methylthiazol-5-yl)ethyl phosphate + 4-amino-2-methyl-5-(diphosphooxymethyl)pyrimidine + 2 H(+) = thiamine phosphate + CO2 + diphosphate. The enzyme catalyses 4-methyl-5-(2-phosphooxyethyl)-thiazole + 4-amino-2-methyl-5-(diphosphooxymethyl)pyrimidine + H(+) = thiamine phosphate + diphosphate. Its pathway is cofactor biosynthesis; thiamine diphosphate biosynthesis; thiamine phosphate from 4-amino-2-methyl-5-diphosphomethylpyrimidine and 4-methyl-5-(2-phosphoethyl)-thiazole: step 1/1. Functionally, condenses 4-methyl-5-(beta-hydroxyethyl)thiazole monophosphate (THZ-P) and 2-methyl-4-amino-5-hydroxymethyl pyrimidine pyrophosphate (HMP-PP) to form thiamine monophosphate (TMP). This is Thiamine-phosphate synthase from Lysinibacillus sphaericus (strain C3-41).